Here is a 732-residue protein sequence, read N- to C-terminus: Elongation factor 2 (732 aa).

One can recognise a tr-type G domain in the interval 19 to 260 (ERIRNIGIAA…MVVRHLPSPI (242 aa)). Residues 28-35 (AHIDHGKT), 94-98 (DTPGH), and 148-151 (NKVD) contribute to the GTP site. The residue at position 597 (histidine 597) is a Diphthamide.

Belongs to the TRAFAC class translation factor GTPase superfamily. Classic translation factor GTPase family. EF-G/EF-2 subfamily.

It is found in the cytoplasm. In terms of biological role, catalyzes the GTP-dependent ribosomal translocation step during translation elongation. During this step, the ribosome changes from the pre-translocational (PRE) to the post-translocational (POST) state as the newly formed A-site-bound peptidyl-tRNA and P-site-bound deacylated tRNA move to the P and E sites, respectively. Catalyzes the coordinated movement of the two tRNA molecules, the mRNA and conformational changes in the ribosome. This is Elongation factor 2 (fusA) from Pyrococcus furiosus (strain ATCC 43587 / DSM 3638 / JCM 8422 / Vc1).